The chain runs to 854 residues: DNA mismatch repair protein MutS (854 aa).

615–622 (GPNMGGKS) contributes to the ATP binding site.

This sequence belongs to the DNA mismatch repair MutS family.

Functionally, this protein is involved in the repair of mismatches in DNA. It is possible that it carries out the mismatch recognition step. This protein has a weak ATPase activity. This Aliivibrio fischeri (strain ATCC 700601 / ES114) (Vibrio fischeri) protein is DNA mismatch repair protein MutS.